The chain runs to 132 residues: Small ribosomal subunit protein uS8 (132 aa).

Belongs to the universal ribosomal protein uS8 family. Part of the 30S ribosomal subunit. Contacts proteins S5 and S12.

One of the primary rRNA binding proteins, it binds directly to 16S rRNA central domain where it helps coordinate assembly of the platform of the 30S subunit. The sequence is that of Small ribosomal subunit protein uS8 from Rhizobium johnstonii (strain DSM 114642 / LMG 32736 / 3841) (Rhizobium leguminosarum bv. viciae).